The following is a 251-amino-acid chain: Hydroxyacylglutathione hydrolase (251 aa).

Zn(2+) contacts are provided by His-53, His-55, Asp-57, His-58, His-110, Asp-127, and His-165.

The protein belongs to the metallo-beta-lactamase superfamily. Glyoxalase II family. Monomer. Requires Zn(2+) as cofactor.

The enzyme catalyses an S-(2-hydroxyacyl)glutathione + H2O = a 2-hydroxy carboxylate + glutathione + H(+). Its pathway is secondary metabolite metabolism; methylglyoxal degradation; (R)-lactate from methylglyoxal: step 2/2. In terms of biological role, thiolesterase that catalyzes the hydrolysis of S-D-lactoyl-glutathione to form glutathione and D-lactic acid. This chain is Hydroxyacylglutathione hydrolase, found in Escherichia coli (strain 55989 / EAEC).